A 436-amino-acid polypeptide reads, in one-letter code: UDP-N-acetylglucosamine 1-carboxyvinyltransferase 1 (436 aa).

Residue 22-23 coordinates phosphoenolpyruvate; the sequence is KN. Residue arginine 93 coordinates UDP-N-acetyl-alpha-D-glucosamine. Cysteine 117 functions as the Proton donor in the catalytic mechanism. 2-(S-cysteinyl)pyruvic acid O-phosphothioketal is present on cysteine 117. Residues 122–126, aspartate 306, and valine 328 each bind UDP-N-acetyl-alpha-D-glucosamine; that span reads RPIDQ.

The protein belongs to the EPSP synthase family. MurA subfamily.

The protein resides in the cytoplasm. The enzyme catalyses phosphoenolpyruvate + UDP-N-acetyl-alpha-D-glucosamine = UDP-N-acetyl-3-O-(1-carboxyvinyl)-alpha-D-glucosamine + phosphate. It participates in cell wall biogenesis; peptidoglycan biosynthesis. Its function is as follows. Cell wall formation. Adds enolpyruvyl to UDP-N-acetylglucosamine. Essential for cell growth. The polypeptide is UDP-N-acetylglucosamine 1-carboxyvinyltransferase 1 (Bacillus subtilis (strain 168)).